The chain runs to 293 residues: Formamidopyrimidine-DNA glycosylase (293 aa).

Catalysis depends on Pro-2, which acts as the Schiff-base intermediate with DNA. Catalysis depends on Glu-3, which acts as the Proton donor. The Proton donor; for beta-elimination activity role is filled by Lys-60. The DNA site is built by His-110, Arg-129, and Lys-174. An FPG-type zinc finger spans residues 259–293 (NVYRRTGKKCHACKNLIERQKISGRSTHWCRKCQK). Arg-283 acts as the Proton donor; for delta-elimination activity in catalysis.

Belongs to the FPG family. In terms of assembly, monomer. Zn(2+) is required as a cofactor.

It catalyses the reaction Hydrolysis of DNA containing ring-opened 7-methylguanine residues, releasing 2,6-diamino-4-hydroxy-5-(N-methyl)formamidopyrimidine.. It carries out the reaction 2'-deoxyribonucleotide-(2'-deoxyribose 5'-phosphate)-2'-deoxyribonucleotide-DNA = a 3'-end 2'-deoxyribonucleotide-(2,3-dehydro-2,3-deoxyribose 5'-phosphate)-DNA + a 5'-end 5'-phospho-2'-deoxyribonucleoside-DNA + H(+). Involved in base excision repair of DNA damaged by oxidation or by mutagenic agents. Acts as a DNA glycosylase that recognizes and removes damaged bases. Has a preference for oxidized purines, such as 7,8-dihydro-8-oxoguanine (8-oxoG). Has AP (apurinic/apyrimidinic) lyase activity and introduces nicks in the DNA strand. Cleaves the DNA backbone by beta-delta elimination to generate a single-strand break at the site of the removed base with both 3'- and 5'-phosphates. The sequence is that of Formamidopyrimidine-DNA glycosylase from Prochlorococcus marinus (strain MIT 9515).